Consider the following 162-residue polypeptide: Interleukin-15 (162 aa).

The signal sequence occupies residues 1 to 29 (MRISKPHLRSVSIQCYLCLLLNSHFLTEA). Positions 30 to 48 (GIHVFILGCFSAGLPKTEA) are excised as a propeptide. 2 cysteine pairs are disulfide-bonded: C83–C133 and C90–C136. N127 is a glycosylation site (N-linked (GlcNAc...) asparagine).

Belongs to the IL-15/IL-21 family.

It localises to the secreted. Cytokine that plays a major role in the development of inflammatory and protective immune responses to microbial invaders and parasites by modulating immune cells of both the innate and adaptive immune systems. Stimulates the proliferation of natural killer cells, T-cells and B-cells and promotes the secretion of several cytokines. In monocytes, induces the production of IL8 and monocyte chemotactic protein 1/CCL2, two chemokines that attract neutrophils and monocytes respectively to sites of infection. Unlike most cytokines, which are secreted in soluble form, IL15 is expressed in association with its high affinity IL15RA on the surface of IL15-producing cells and delivers signals to target cells that express IL2RB and IL2RG receptor subunits. Binding to its receptor triggers the phosphorylation of JAK1 and JAK3 and the recruitment and subsequent phosphorylation of signal transducer and activator of transcription-3/STAT3 and STAT5. In mast cells, induces the rapid tyrosine phosphorylation of STAT6 and thereby controls mast cell survival and release of cytokines such as IL4. This Macaca thibetana (Pere David's macaque) protein is Interleukin-15 (IL15).